A 178-amino-acid chain; its full sequence is Ribose 1,5-bisphosphate phosphokinase PhnN (178 aa).

9 to 16 (GPSGSGKD) is an ATP binding site.

Belongs to the ribose 1,5-bisphosphokinase family.

The enzyme catalyses alpha-D-ribose 1,5-bisphosphate + ATP = 5-phospho-alpha-D-ribose 1-diphosphate + ADP. It participates in metabolic intermediate biosynthesis; 5-phospho-alpha-D-ribose 1-diphosphate biosynthesis; 5-phospho-alpha-D-ribose 1-diphosphate from D-ribose 5-phosphate (route II): step 3/3. In terms of biological role, catalyzes the phosphorylation of ribose 1,5-bisphosphate to 5-phospho-D-ribosyl alpha-1-diphosphate (PRPP). This Pantoea vagans (strain C9-1) (Pantoea agglomerans (strain C9-1)) protein is Ribose 1,5-bisphosphate phosphokinase PhnN.